Consider the following 459-residue polypeptide: MGSKSPEDHRQGPDGGSADTAIAIVNPPKSAAASGLLQGMLEGQDEDGDDDDDEKTGIDLKTNDGAKKKRKRNKKKSKKLSVVQQTSPPRVPLATLFDNQPYPEGQIVDYNVKDDNLQRTTAEELRHLAAVRDMDDDFLKDYRKAAEVHRQVRRYAQAIAKPGVSMTRLAEEIDDGVRALTGHEGLETGDALKAGLAFPTGLCLNHVGAHWTPNAGAKDVILKHDDVLKVDFGVHVNGRIVDSAFTVAANPVYDNLLAAVKAATNTGLEEAGIDARIDHISEAIQEVMESYEVELNGKTIPIKAVRNITGHNILRYRIHGDKQVPFVKTKTDQRMEEGDIFAIETFGSTGKAYLQDDVGVYGYGRNENMNPAVLHQSSAKSLLKTIDANFGTLVFARRQLERLPGVEKYHLGMRTLVNSGLVESYAPLVDIPGSYIAQFEHTVLLRPNCKEIISRGEDY.

Over residues M1 to G12 the composition is skewed to basic and acidic residues. Positions M1 to S87 are disordered. Over residues G43 to E54 the composition is skewed to acidic residues. Positions K55–A66 are enriched in basic and acidic residues. The segment covering K67–K79 has biased composition (basic residues). H210 contributes to the substrate binding site. The a divalent metal cation site is built by D231, D242, and H311. H319 is a binding site for substrate. A divalent metal cation contacts are provided by E344 and E440.

It belongs to the peptidase M24A family. Methionine aminopeptidase eukaryotic type 2 subfamily. Co(2+) serves as cofactor. Requires Zn(2+) as cofactor. Mn(2+) is required as a cofactor. It depends on Fe(2+) as a cofactor.

The protein resides in the cytoplasm. It catalyses the reaction Release of N-terminal amino acids, preferentially methionine, from peptides and arylamides.. Cotranslationally removes the N-terminal methionine from nascent proteins. The N-terminal methionine is often cleaved when the second residue in the primary sequence is small and uncharged (Met-Ala-, Cys, Gly, Pro, Ser, Thr, or Val). The sequence is that of Methionine aminopeptidase 2-2 from Pyrenophora teres f. teres (strain 0-1) (Barley net blotch fungus).